Reading from the N-terminus, the 354-residue chain is UDP-N-acetylglucosamine--N-acetylmuramyl-(pentapeptide) pyrophosphoryl-undecaprenol N-acetylglucosamine transferase (354 aa).

UDP-N-acetyl-alpha-D-glucosamine-binding positions include 11-13 (TAG), Arg-164, Ser-194, and Gln-289.

The protein belongs to the glycosyltransferase 28 family. MurG subfamily.

Its subcellular location is the cell membrane. The catalysed reaction is di-trans,octa-cis-undecaprenyl diphospho-N-acetyl-alpha-D-muramoyl-L-alanyl-D-glutamyl-meso-2,6-diaminopimeloyl-D-alanyl-D-alanine + UDP-N-acetyl-alpha-D-glucosamine = di-trans,octa-cis-undecaprenyl diphospho-[N-acetyl-alpha-D-glucosaminyl-(1-&gt;4)]-N-acetyl-alpha-D-muramoyl-L-alanyl-D-glutamyl-meso-2,6-diaminopimeloyl-D-alanyl-D-alanine + UDP + H(+). Its pathway is cell wall biogenesis; peptidoglycan biosynthesis. In terms of biological role, cell wall formation. Catalyzes the transfer of a GlcNAc subunit on undecaprenyl-pyrophosphoryl-MurNAc-pentapeptide (lipid intermediate I) to form undecaprenyl-pyrophosphoryl-MurNAc-(pentapeptide)GlcNAc (lipid intermediate II). This Clostridium botulinum (strain ATCC 19397 / Type A) protein is UDP-N-acetylglucosamine--N-acetylmuramyl-(pentapeptide) pyrophosphoryl-undecaprenol N-acetylglucosamine transferase.